A 572-amino-acid polypeptide reads, in one-letter code: Arginine--tRNA ligase (572 aa).

The short motif at 122-132 (PNLAKEMHVGH) is the 'HIGH' region element.

It belongs to the class-I aminoacyl-tRNA synthetase family. Monomer.

The protein localises to the cytoplasm. The catalysed reaction is tRNA(Arg) + L-arginine + ATP = L-arginyl-tRNA(Arg) + AMP + diphosphate. The polypeptide is Arginine--tRNA ligase (Neisseria gonorrhoeae (strain ATCC 700825 / FA 1090)).